Reading from the N-terminus, the 499-residue chain is uncharacterized protein (499 aa).

Transmembrane regions (helical) follow at residues 5-25 (FLLV…YNAV), 79-99 (LGLR…TYLL), 110-130 (ALLS…ARYA), 132-152 (PEVP…EYFT), 170-190 (VLTK…FYLL), 203-223 (YAGT…QYLV), 252-272 (ALDI…ALFW), 286-306 (VWFS…PVYI), 332-352 (LSLI…SLYF), 354-374 (FSAT…LKKY), and 377-397 (LPAF…LPYV).

Belongs to the glycosyltransferase 39 family.

Its subcellular location is the cell membrane. This is an uncharacterized protein from Aquifex aeolicus (strain VF5).